Reading from the N-terminus, the 130-residue chain is Transcription antitermination protein NusB (130 aa).

This sequence belongs to the NusB family.

Functionally, involved in transcription antitermination. Required for transcription of ribosomal RNA (rRNA) genes. Binds specifically to the boxA antiterminator sequence of the ribosomal RNA (rrn) operons. The protein is Transcription antitermination protein NusB of Bacillus cereus (strain ATCC 10987 / NRS 248).